The primary structure comprises 340 residues: Nucleoid-associated protein PSPA7_4451 (340 aa).

The protein belongs to the YejK family.

It localises to the cytoplasm. The protein localises to the nucleoid. This Pseudomonas paraeruginosa (strain DSM 24068 / PA7) (Pseudomonas aeruginosa (strain PA7)) protein is Nucleoid-associated protein PSPA7_4451.